A 242-amino-acid chain; its full sequence is uncharacterized protein (242 aa).

Residues 1-12 show a composition bias toward basic and acidic residues; that stretch reads MKLRRERFERRN. The interval 1–21 is disordered; that stretch reads MKLRRERFERRNGSGKNSQSS. Over 1 to 23 the chain is Cytoplasmic; it reads MKLRRERFERRNGSGKNSQSSSS. A helical membrane pass occupies residues 24–44; that stretch reads WMVTFTDLITLILVFFILLFS. Residues 45 to 242 are Extracellular-facing; it reads MSQIDLQKFK…VIKKSKTTSS (198 aa). The disordered stretch occupies residues 64 to 91; it reads GNGLQPDQTSIEKKNTSPSDTKKQEDQQ. The span at 73–89 shows a compositional bias: basic and acidic residues; it reads SIEKKNTSPSDTKKQED. Residues 117–238 enclose the OmpA-like domain; that stretch reads ERGVVLVLQE…RVEIVIKKSK (122 aa).

It belongs to the MotB family.

Its subcellular location is the cell membrane. Its function is as follows. May be involved in some transport function. This is an uncharacterized protein from Bacillus subtilis (strain 168).